Consider the following 728-residue polypeptide: Phosphoribosylformylglycinamidine synthase subunit PurL (728 aa).

The active site involves histidine 42. ATP contacts are provided by tyrosine 45 and lysine 84. Mg(2+) is bound at residue glutamate 86. Residues 87 to 90 (SHNH) and arginine 109 each bind substrate. Histidine 88 serves as the catalytic Proton acceptor. A Mg(2+)-binding site is contributed by aspartate 110. Substrate is bound at residue glutamine 237. Mg(2+) is bound at residue aspartate 265. Residue 309-311 (ESQ) coordinates substrate. 2 residues coordinate ATP: aspartate 491 and glycine 528. Asparagine 529 contacts Mg(2+). Residue serine 531 coordinates substrate.

It belongs to the FGAMS family. In terms of assembly, monomer. Part of the FGAM synthase complex composed of 1 PurL, 1 PurQ and 2 PurS subunits.

The protein localises to the cytoplasm. It catalyses the reaction N(2)-formyl-N(1)-(5-phospho-beta-D-ribosyl)glycinamide + L-glutamine + ATP + H2O = 2-formamido-N(1)-(5-O-phospho-beta-D-ribosyl)acetamidine + L-glutamate + ADP + phosphate + H(+). It participates in purine metabolism; IMP biosynthesis via de novo pathway; 5-amino-1-(5-phospho-D-ribosyl)imidazole from N(2)-formyl-N(1)-(5-phospho-D-ribosyl)glycinamide: step 1/2. Part of the phosphoribosylformylglycinamidine synthase complex involved in the purines biosynthetic pathway. Catalyzes the ATP-dependent conversion of formylglycinamide ribonucleotide (FGAR) and glutamine to yield formylglycinamidine ribonucleotide (FGAM) and glutamate. The FGAM synthase complex is composed of three subunits. PurQ produces an ammonia molecule by converting glutamine to glutamate. PurL transfers the ammonia molecule to FGAR to form FGAM in an ATP-dependent manner. PurS interacts with PurQ and PurL and is thought to assist in the transfer of the ammonia molecule from PurQ to PurL. The polypeptide is Phosphoribosylformylglycinamidine synthase subunit PurL (Campylobacter jejuni subsp. jejuni serotype O:23/36 (strain 81-176)).